Reading from the N-terminus, the 166-residue chain is Thioredoxin, mitochondrial (166 aa).

The transit peptide at 1 to 59 (MAQRLLLRRFLTSIISGKPSQSRWAPVASRALQTPQYSPGYLTVTPSQARSIYTTRVCS) directs the protein to the mitochondrion. A Thioredoxin domain is found at 61–166 (TFNIQDGPDF…LEAFLKKLIG (106 aa)). Active-site nucleophile residues include C90 and C93. A disulfide bridge links C90 with C93. K152 carries the N6-acetyllysine; alternate modification. At K152 the chain carries N6-succinyllysine; alternate.

The protein belongs to the thioredoxin family. In terms of assembly, monomer.

It is found in the mitochondrion. Its function is as follows. Important for the control of mitochondrial reactive oxygen species homeostasis, apoptosis regulation and cell viability. Is involved in various redox reactions including the reduction of protein disulfide bonds, through the reversible oxidation of its active center dithiol to a disulfide. The protein is Thioredoxin, mitochondrial (TXN2) of Bos taurus (Bovine).